The primary structure comprises 548 residues: MESQRNLILIGLLFVSFLLWQQWESDKAPKPAPTTVAQTEHFVPEAGQTGDIPQVSEQANANAARKLITVSSDVLKLTLDTQGGDIVSAELLAHKLEEGKDQSFVLLTSQPDRLYVAQSGLVGRDGPDSQAQGRPTYEAAQTSYQLADGQDQVVVPMTWTDSKGVVFTKEFVLKRGDYAIGVDYKIDNKSAEPVQVQFYGQLKQTVTTPKDQEGHAMVASAYRGGAFSSEESRYKKYTFDEMKDADLNKTTKGGWVAMLQHYFVSAWAPNADDTNSFYSRVIPGKDQAIIGYKAPLVDVAAGQQAEVTSKLWVGPKLQDQMAKVANHLDLTVDYGWLWFIAQPLHWLLTVFQGFVHNWGVAIIMLTLLVRGIMFPLTKAQYTSMAKMRMLQPKLAALKERFSDDRQKMSQGMMELYKKEKVNPLGGCLPILVQMPIFIALYWALMESVELRHAPFALWITDLSVKDPFFVLPILMGASMWYLQKMSPTTITDPMQQKVMQFMPIIFTFMFLWFPAGLTLYWLVSNVISITQQTIIYRQLEKKGLHTRT.

5 consecutive transmembrane segments (helical) span residues 6–26, 349–369, 424–444, 455–475, and 503–523; these read NLIL…WESD, TVFQ…TLLV, LGGC…YWAL, FALW…PILM, and PIIF…YWLV.

This sequence belongs to the OXA1/ALB3/YidC family. Type 1 subfamily. In terms of assembly, interacts with the Sec translocase complex via SecD. Specifically interacts with transmembrane segments of nascent integral membrane proteins during membrane integration.

It is found in the cell inner membrane. Its function is as follows. Required for the insertion and/or proper folding and/or complex formation of integral membrane proteins into the membrane. Involved in integration of membrane proteins that insert both dependently and independently of the Sec translocase complex, as well as at least some lipoproteins. Aids folding of multispanning membrane proteins. This is Membrane protein insertase YidC from Aeromonas salmonicida (strain A449).